A 290-amino-acid polypeptide reads, in one-letter code: MVEMEQAEAQLSELDLLASMFPSENELIVNDQLALAELKDCIEKRTMEGRSSQVYFTINVSLDLSEAAVVTFSLSCILPFKYPTVLPEITVRSVSLSRSQQTQLNTDLIAYLQKNCLGDVCILNATEWVKEHAFDYVNIEALPSPARQSTAQPEDLAFTRLWIYSHHIYNKCKRRNILEWAKELSLTGFSMPGKPGVVCVEGPQSACEEFWSRLRKLNWKRILIRHREDIPLDGTAGGMEGQRKFPILEEKAFSVHGARGNHMDFGQLYQFLNARGCGDVFQMFFGVEGQ.

Residues 12-136 (SELDLLASMF…EWVKEHAFDY (125 aa)) form the RWD domain.

The sequence is that of RWD domain-containing protein 2B (Rwdd2b) from Mus musculus (Mouse).